A 324-amino-acid polypeptide reads, in one-letter code: Probable uridine nucleosidase 1 (324 aa).

Residue His-248 is part of the active site.

Belongs to the IUNH family.

Its subcellular location is the cytoplasm. It catalyses the reaction uridine + H2O = D-ribose + uracil. Its function is as follows. Involved in pyrimidine breakdown. The sequence is that of Probable uridine nucleosidase 1 (URH1) from Oryza sativa subsp. japonica (Rice).